Here is a 152-residue protein sequence, read N- to C-terminus: Transcriptional regulator MraZ (152 aa).

2 SpoVT-AbrB domains span residues 5–52 (HSNR…PMPE) and 81–124 (ATEV…DQGR).

It belongs to the MraZ family. Forms oligomers.

The protein resides in the cytoplasm. It localises to the nucleoid. In Solidesulfovibrio magneticus (strain ATCC 700980 / DSM 13731 / RS-1) (Desulfovibrio magneticus), this protein is Transcriptional regulator MraZ.